The sequence spans 358 residues: tRNA-specific 2-thiouridylase MnmA (358 aa).

ATP is bound by residues 10–17 (AMSGGVDS) and M36. C105 functions as the Nucleophile in the catalytic mechanism. C105 and C202 are oxidised to a cystine. Residue G129 participates in ATP binding. The interval 152 to 154 (KDQ) is interaction with tRNA. The active-site Cysteine persulfide intermediate is C202. Residues 308-309 (RY) are interaction with tRNA.

Belongs to the MnmA/TRMU family.

Its subcellular location is the cytoplasm. It carries out the reaction S-sulfanyl-L-cysteinyl-[protein] + uridine(34) in tRNA + AH2 + ATP = 2-thiouridine(34) in tRNA + L-cysteinyl-[protein] + A + AMP + diphosphate + H(+). Functionally, catalyzes the 2-thiolation of uridine at the wobble position (U34) of tRNA, leading to the formation of s(2)U34. The chain is tRNA-specific 2-thiouridylase MnmA from Magnetococcus marinus (strain ATCC BAA-1437 / JCM 17883 / MC-1).